A 33-amino-acid chain; its full sequence is Pardaxin P-3 (33 aa).

The protein belongs to the pardaxin family. As to quaternary structure, in aqueous solution exists as a tetramer.

The protein resides in the secreted. The protein localises to the target cell membrane. In terms of biological role, exhibits unusual shark repellent and surfactant properties. Forms voltage-dependent, ion-permeable channels in membranes. At high concentration causes cell membrane lysis. This chain is Pardaxin P-3, found in Pardachirus pavoninus (Peacock sole).